A 520-amino-acid chain; its full sequence is Developmental regulatory protein wetA (520 aa).

4 disordered regions span residues Ala-110–Arg-149, His-260–Ser-294, Thr-388–Lys-453, and Leu-471–Lys-496. A compositionally biased stretch (low complexity) spans Pro-261 to Ser-294. The segment covering Thr-388 to Leu-401 has biased composition (polar residues). Residues Pro-420 to Lys-429 show a composition bias toward basic residues. The segment covering Asn-436–Lys-453 has biased composition (low complexity).

It belongs to the wetA family.

Functionally, brlA, abaA and wetA are pivotal regulators of conidiophore development and conidium maturation. They act individually and together to regulate their own expression and that of numerous other sporulation-specific genes. Plays a crucial role in pigmentation and conidial cell wall integrity. The chain is Developmental regulatory protein wetA from Penicillium digitatum (strain PHI26 / CECT 20796) (Green mold).